The following is a 464-amino-acid chain: Argininosuccinate lyase (464 aa).

The protein belongs to the lyase 1 family. Argininosuccinate lyase subfamily.

Its subcellular location is the cytoplasm. The catalysed reaction is 2-(N(omega)-L-arginino)succinate = fumarate + L-arginine. The protein operates within amino-acid biosynthesis; L-arginine biosynthesis; L-arginine from L-ornithine and carbamoyl phosphate: step 3/3. This is Argininosuccinate lyase from Pseudomonas aeruginosa (strain UCBPP-PA14).